The primary structure comprises 258 residues: Transcriptional repressor AccR (258 aa).

Residues 6–61 (TQDRQAKIVELLRDEQFLAIGRLTEHFQISVATARRDLSELHEAGLLRRTHGGAVS) form the HTH deoR-type domain. The H-T-H motif DNA-binding region spans 23-42 (LAIGRLTEHFQISVATARRD).

Functionally, represses opine catabolism and conjugal transfer of the nopaline Ti plasmid pTiC58. In Agrobacterium fabrum (strain C58 / ATCC 33970) (Agrobacterium tumefaciens (strain C58)), this protein is Transcriptional repressor AccR (accR).